Here is a 469-residue protein sequence, read N- to C-terminus: Ribulose bisphosphate carboxylase large chain (469 aa).

N6,N6,N6-trimethyllysine is present on Lys8. Residues Asn117 and Thr167 each contribute to the substrate site. The Proton acceptor role is filled by Lys169. Residue Lys171 participates in substrate binding. The Mg(2+) site is built by Lys195, Asp197, and Glu198. An N6-carboxylysine modification is found at Lys195. His288 serves as the catalytic Proton acceptor. Positions 289, 321, and 373 each coordinate substrate.

This sequence belongs to the RuBisCO large chain family. Type I subfamily. As to quaternary structure, heterohexadecamer of 8 large chains and 8 small chains; disulfide-linked. The disulfide link is formed within the large subunit homodimers. Mg(2+) is required as a cofactor. Post-translationally, the disulfide bond which can form in the large chain dimeric partners within the hexadecamer appears to be associated with oxidative stress and protein turnover.

The protein localises to the plastid. It is found in the chloroplast. It catalyses the reaction 2 (2R)-3-phosphoglycerate + 2 H(+) = D-ribulose 1,5-bisphosphate + CO2 + H2O. It carries out the reaction D-ribulose 1,5-bisphosphate + O2 = 2-phosphoglycolate + (2R)-3-phosphoglycerate + 2 H(+). Its function is as follows. RuBisCO catalyzes two reactions: the carboxylation of D-ribulose 1,5-bisphosphate, the primary event in carbon dioxide fixation, as well as the oxidative fragmentation of the pentose substrate in the photorespiration process. Both reactions occur simultaneously and in competition at the same active site. This chain is Ribulose bisphosphate carboxylase large chain, found in Akania bidwillii (Turnipwood).